The primary structure comprises 354 residues: Rhodopsin (354 aa).

The Extracellular segment spans residues 1-36 (MNGTEGPYFYIPMLNTTGVVRSPYEYPQYYLVNPAA). Residues Asn-2 and Asn-15 are each glycosylated (N-linked (GlcNAc...) asparagine). A helical transmembrane segment spans residues 37–61 (YAVLGAYMFFLILVGFPINFLTLYV). Topologically, residues 62–73 (TIEHKKLRTPLN) are cytoplasmic. A helical membrane pass occupies residues 74–96 (YILLNLAVADLFMVFGGFTTTIY). Topologically, residues 97-110 (TSMHGYFVLGRLGC) are extracellular. A disulfide bridge links Cys-110 with Cys-187. A helical membrane pass occupies residues 111–133 (NVEGFSATLGGEIALWSLVVLAI). The 'Ionic lock' involved in activated form stabilization signature appears at 134-136 (ERW). At 134–152 (ERWVVVCKPISNFRFGENH) the chain is on the cytoplasmic side. The helical transmembrane segment at 153-173 (AIMGVAFTWFMAAACAVPPLF) threads the bilayer. Over 174-202 (GWSRYIPEGMQCSCGIDYYTRAEGFNNES) the chain is Extracellular. N-linked (GlcNAc...) asparagine glycosylation occurs at Asn-200. Residues 203–224 (FVIYMFTCHFCIPLMVVFFCYG) form a helical membrane-spanning segment. The Cytoplasmic segment spans residues 225–252 (RLVCAVKEAAAAQQESETTQRAEREVTR). The chain crosses the membrane as a helical span at residues 253–274 (MVIIMVVSFLVSWVPYASVAWY). Residues 275–286 (IFTHQGSEFGPL) are Extracellular-facing. A helical membrane pass occupies residues 287 to 308 (FMTIPAFFAKSSSIYNPMIYIC). Position 296 is an N6-(retinylidene)lysine (Lys-296). Topologically, residues 309 to 354 (MNKQFRHCMITTLCCGKNPFEEEEGASSTASKTEASSVSSSSVSPA) are cytoplasmic. 2 S-palmitoyl cysteine lipidation sites follow: Cys-322 and Cys-323. Positions 329 to 354 (EEEEGASSTASKTEASSVSSSSVSPA) are disordered. Positions 334 to 354 (ASSTASKTEASSVSSSSVSPA) are enriched in low complexity.

It belongs to the G-protein coupled receptor 1 family. Opsin subfamily. Post-translationally, phosphorylated on some or all of the serine and threonine residues present in the C-terminal region. In terms of processing, contains one covalently linked retinal chromophore.

It localises to the membrane. The protein resides in the cell projection. The protein localises to the cilium. It is found in the photoreceptor outer segment. Photoreceptor required for image-forming vision at low light intensity. While most salt water fish species use retinal as chromophore, most freshwater fish use 3-dehydroretinal, or a mixture of retinal and 3-dehydroretinal. Light-induced isomerization of 11-cis to all-trans retinal triggers a conformational change that activates signaling via G-proteins. Subsequent receptor phosphorylation mediates displacement of the bound G-protein alpha subunit by arrestin and terminates signaling. The sequence is that of Rhodopsin (rho) from Atherina boyeri (Big-scale sand smelt).